The following is a 1432-amino-acid chain: MSSEGLASARELEERDLGATRDTEEIPSDEEEGEDVFDSSEEDEDLDEDEEEARKVKEGFIVSDDEEDDSSVKQRRRRKHKRRPRHEEDDGKLSEDDLDLLMENAGVKRTTRPETDATKGRFKRLKRAGSPDESEGQQDTDGRHENRLEDFFSEEEDEEHLGGTENRRLRTGGKDVLDELDDFIEEDEFSDEDEATRQQRRKLKEQRSKQSVQITGLSSDKIDEMYDIFGDGHDYDWALAVENEDDLENLDEYQQEEDDDETSDQKAKKKKITLQDIYDMQDLKKNLMTEEDMVIRRSDIPERYQELRAGLKNYGQLTPEDQLLEQNWISDKIAVDKNFDATYDISEFREAVGDAVRFISKENLEVSFIYAYRRNYISSRDKNGFILSEDDLWDIVFYDIEFHSIIYKRDYVKKFYEQLGIRDSLVDDYFNDESMTELNSLQDIYNYLEFRYAHEINDALLADSSSKTKKHLKNSSYEKFKSSSLYQAVKDVGITAEQIGENIGAETQIHPVVDHPNLKPSESISQILDAASADLQVFAKNHKLAWDTVQKYFAAEIGNNPKVRQKIRNDFYKYYIVDVVLTTKGRKEIQRSSPYEDIKYAINRTPGHFRSAPDVFLRMLEAESLHLMNIKIHMSSQEQYCEHLFQIALETTNTSEIAIEWNNFRRNAFYQALEKIFEDIAQEIKDELKKTSQKLVANSVRHRFMSKLDQAPFIPNPREPKIPRVLTITCGQGRFGLDAIIAVLLNRKGDFVKDFKIVQNPFDRDQPQAFEAVLDNIIQEAQPNVIGINGPNPKTQKLFKKIQEVIQKKQIVDNRGHNIPVIFVEDEIAIRYQSSERGAQEFPNKPTLVKYCIALARYIHSPLLEYTNLSEEELQSLLIHPHQSLLPRHIFKRALETSFVDIVNLVGVEVNKANDNPYYAKALQYIAGLGKRKAIDFLESLQRLNEPLLARQQLITHDILHKTIFMNSAGFLYISWNEKNQRYEDLEHDHLDSTRIHPEDYHLATKVAADALEYDPDAIREKEEQGAMSEFIELLRDDPDRRMKLESLNLEEYADELERSTGQRKLNNLNTIVLELLEGFEELRNDFHPLQGDEIFTSLTGETDKTFFKGSIIPVRVERFKHNDIICISNSQVECIVNAQRHLGVQLKRPASDIYEVGKTYPAKIIFIDYENISAEVSLLDHDVKHQYIPVDYSKDPTIWNLKQELEDVEEEKKISMAEARAKRTHRVINHPYYFPFNGKQAEDYLRSKERGEFIIRQSSRGDDHLAITWKLDKDLFQHVDILELDKENPLALGKTLIVDNNKYNDLDHVIVEYLQNKIKLLNEITSNEKFKKGTKKEVVKFIEDYSNVNPNRSVYYLSFNYEHPGWFYLMFKINAQSKLCTWNVKLTHNGFSLADYNYPTVIQLCNGFKTLLKSSSRARTQEASGSGYYGY.

The segment at 1–215 (MSSEGLASAR…QRSKQSVQIT (215 aa)) is disordered. Positions 10–24 (RELEERDLGATRDTE) are enriched in basic and acidic residues. The segment covering 25–51 (EIPSDEEEGEDVFDSSEEDEDLDEDEE) has biased composition (acidic residues). Basic residues predominate over residues 73–84 (KQRRRRKHKRRP). 3 stretches are compositionally biased toward basic and acidic residues: residues 85–95 (RHEEDDGKLSE), 140–150 (TDGRHENRLED), and 160–177 (HLGGTENRRLRTGGKDVL). A compositionally biased stretch (acidic residues) spans 178 to 194 (DELDDFIEEDEFSDEDE). The 98-residue stretch at 1232–1329 (PYYFPFNGKQ…KLLNEITSNE (98 aa)) folds into the SH2 domain.

It belongs to the SPT6 family.

It localises to the nucleus. The protein resides in the chromosome. Functionally, histone H3-H4 chaperone that plays a role in maintenance of chromatin structure during RNA polymerase II transcription elongation thereby repressing transcription initiation from cryptic promoters. Mediates the reassembly of nucleosomes onto the promoters of at least a selected set of genes during repression; the nucleosome reassembly is essential for transcriptional repression. Essential for viability. This is Transcription elongation factor SPT6 (SPT6) from Eremothecium gossypii (strain ATCC 10895 / CBS 109.51 / FGSC 9923 / NRRL Y-1056) (Yeast).